Reading from the N-terminus, the 865-residue chain is MYMSTDEVRNAFLKFFESKGHQIVESSSLVPHNDPTLLFTNAGMNQFKDCFLGLEKRAYTRATTAQRCVRAGGKHNDLENVGFTARHHTFFEMLGNFSFGDYFKEDAIAFAWEFLTETLKLPADRLLVTVYETDDEAFDIWNKKVGVPADRIIRIGDKKGGKPFESDNFWQMGDTGPCGPCTEIFYDHGEHIWGGRPGTPEEDGDRFIEIWNNVFMQFNRQADGTMEPLPKPSVDTGMGIERISAIMQGVHSNYEIDVFQALIKAAAEVIGYEDLSNQSLRVIADHIRSCSFLIVDGVMPSNEGRGYVLRRIIRRAVRHGNKLGAQGAFFHKLVGVLAEIMGTAGEELKRQQAVVEKVLRIEEENFGRTLERGMAILNEALDNISSQGTDGKVLDGETVFKLYDTYGFPADLTNDVAREREFAIDEEGFEKAMEEQRQRAREAGNFGTDYNAAIKVDTQTEFCGYTGTKGSSSVAAMFVEGNEVESLSAGDKAIIVLGETPFYAESGGQCGDAGEIRTESGVFRVEDTQKLGNAIAHHGVMAEGVLAKGDEVATIVDAERRAAISLNHSATHLLHAALRQLLGEHVTQKGSLVKADGLRFDFSHLEAVTAAELKEVERLVNAQIRRNHVIETNVMDIESAKKKGAMALFGEKYDDEVRVLSMGDFSTELCGGIHASSTGDIGLFKITSEGGIAAGIRRIEAVTGEGALDAIEAQAAKYEEKLAESAQKAKSLEKEIQKLKDKMAAAESANIMGKVQDINGTKVLIAALEGADNKNLRTMVDDIKNQVGSGVILLANVNDDKIGLIAGVTKDLIGKVKAGDLVKMVAEQVGGKGGGRPDMAQAGGTDVAALPAAIQTVQPWLEERL.

His568, His572, Cys670, and His674 together coordinate Zn(2+).

Belongs to the class-II aminoacyl-tRNA synthetase family. It depends on Zn(2+) as a cofactor.

It is found in the cytoplasm. It carries out the reaction tRNA(Ala) + L-alanine + ATP = L-alanyl-tRNA(Ala) + AMP + diphosphate. Catalyzes the attachment of alanine to tRNA(Ala) in a two-step reaction: alanine is first activated by ATP to form Ala-AMP and then transferred to the acceptor end of tRNA(Ala). Also edits incorrectly charged Ser-tRNA(Ala) and Gly-tRNA(Ala) via its editing domain. This Vibrio campbellii (strain ATCC BAA-1116) protein is Alanine--tRNA ligase.